We begin with the raw amino-acid sequence, 393 residues long: Succinate--CoA ligase [ADP-forming] subunit beta (393 aa).

The 229-residue stretch at R9–A237 folds into the ATP-grasp domain. Residues K45, G52–G54, E92, P95, and E100 each bind ATP. Residues N192 and D206 each contribute to the Mg(2+) site. Residues N257 and G319–T321 contribute to the substrate site.

This sequence belongs to the succinate/malate CoA ligase beta subunit family. In terms of assembly, heterotetramer of two alpha and two beta subunits. Mg(2+) is required as a cofactor.

The enzyme catalyses succinate + ATP + CoA = succinyl-CoA + ADP + phosphate. It carries out the reaction GTP + succinate + CoA = succinyl-CoA + GDP + phosphate. It functions in the pathway carbohydrate metabolism; tricarboxylic acid cycle; succinate from succinyl-CoA (ligase route): step 1/1. In terms of biological role, succinyl-CoA synthetase functions in the citric acid cycle (TCA), coupling the hydrolysis of succinyl-CoA to the synthesis of either ATP or GTP and thus represents the only step of substrate-level phosphorylation in the TCA. The beta subunit provides nucleotide specificity of the enzyme and binds the substrate succinate, while the binding sites for coenzyme A and phosphate are found in the alpha subunit. This chain is Succinate--CoA ligase [ADP-forming] subunit beta, found in Streptomyces griseus subsp. griseus (strain JCM 4626 / CBS 651.72 / NBRC 13350 / KCC S-0626 / ISP 5235).